We begin with the raw amino-acid sequence, 166 residues long: Small ribosomal subunit protein uS5 (166 aa).

One can recognise an S5 DRBM domain in the interval 11–74 (LQEKLIAVNR…EKARRNMINV (64 aa)).

It belongs to the universal ribosomal protein uS5 family. Part of the 30S ribosomal subunit. Contacts proteins S4 and S8.

In terms of biological role, with S4 and S12 plays an important role in translational accuracy. Its function is as follows. Located at the back of the 30S subunit body where it stabilizes the conformation of the head with respect to the body. This chain is Small ribosomal subunit protein uS5, found in Haemophilus ducreyi (strain 35000HP / ATCC 700724).